Consider the following 239-residue polypeptide: Purine nucleoside phosphorylase DeoD-type (239 aa).

Residue histidine 5 participates in a purine D-ribonucleoside binding. Residues glycine 21, arginine 25, arginine 44, and 88-91 (RIGS) contribute to the phosphate site. A purine D-ribonucleoside-binding positions include 180–182 (EME) and 204–205 (TD). Aspartate 205 acts as the Proton donor in catalysis.

This sequence belongs to the PNP/UDP phosphorylase family. In terms of assembly, homohexamer; trimer of homodimers.

The enzyme catalyses a purine D-ribonucleoside + phosphate = a purine nucleobase + alpha-D-ribose 1-phosphate. The catalysed reaction is a purine 2'-deoxy-D-ribonucleoside + phosphate = a purine nucleobase + 2-deoxy-alpha-D-ribose 1-phosphate. In terms of biological role, catalyzes the reversible phosphorolytic breakdown of the N-glycosidic bond in the beta-(deoxy)ribonucleoside molecules, with the formation of the corresponding free purine bases and pentose-1-phosphate. In Aliivibrio fischeri (strain ATCC 700601 / ES114) (Vibrio fischeri), this protein is Purine nucleoside phosphorylase DeoD-type.